We begin with the raw amino-acid sequence, 1026 residues long: SWI/SNF-related matrix-associated actin-dependent regulator of chromatin subfamily A containing DEAD/H box 1 (1026 aa).

Met-1 is subject to N-acetylmethionine. Positions 1–82 (MNLFNLDRFR…DNERKASISY (82 aa)) are disordered. Residues 7–19 (DRFRFEKRNKIEE) show a composition bias toward basic and acidic residues. Thr-54 carries the post-translational modification Phosphothreonine. Ser-57 carries the post-translational modification Phosphoserine. Position 71 is a phosphothreonine (Thr-71). Residue Lys-77 forms a Glycyl lysine isopeptide (Lys-Gly) (interchain with G-Cter in SUMO2) linkage. Ser-79 carries the phosphoserine modification. Residue Lys-84 forms a Glycyl lysine isopeptide (Lys-Gly) (interchain with G-Cter in SUMO2) linkage. Residues Ser-124, Ser-127, Ser-132, Ser-146, and Ser-152 each carry the phosphoserine modification. Residues 157 to 199 (LKDAKLQTLKELFPQRSDNDLLKLIESTSTMDGAIAAALLMFG) form the CUE 1 domain. 2 disordered regions span residues 203–251 (GGPR…NWEK) and 302–328 (SQSEVPNGKEVSSRSQNYPKNATKTKL). Ser-211 and Ser-214 each carry phosphoserine. Phosphotyrosine is present on Tyr-217. The span at 226–238 (QSIKKTRLDHGEE) shows a compositional bias: basic and acidic residues. Phosphoserine occurs at positions 239 and 242. In terms of domain architecture, CUE 2 spans 251–294 (KQESIVLKLQKEFPNFDKQELREVLKEHEWMYTEALESLKVFAE). Phosphoserine is present on Ser-302. Over residues 314 to 323 (SRSQNYPKNA) the composition is skewed to polar residues. Lys-335 participates in a covalent cross-link: Glycyl lysine isopeptide (Lys-Gly) (interchain with G-Cter in SUMO2). The disordered stretch occupies residues 354–373 (VVEDSEYDSGSDVGSSLDED). Residue Lys-471 forms a Glycyl lysine isopeptide (Lys-Gly) (interchain with G-Cter in SUMO2) linkage. The 169-residue stretch at 509–677 (ALVHKHGLNG…MSLLNFVMPH (169 aa)) folds into the Helicase ATP-binding domain. 521–529 (ADEMGLGKT) contacts ATP. The DEGH box signature appears at 628–631 (DEGH). A Nuclear localization signal motif is present at residues 721–738 (RRVKEEVLKQLPPKKDRI). A Glycyl lysine isopeptide (Lys-Gly) (interchain with G-Cter in SUMO2) cross-link involves residue Lys-724. Positions 858 to 1010 (VLGCILSELK…MTTVDEGDEG (153 aa)) constitute a Helicase C-terminal domain. 897–904 (YLRLDGKT) provides a ligand contact to ATP. Residue Lys-996 forms a Glycyl lysine isopeptide (Lys-Gly) (interchain with G-Cter in SUMO2) linkage. The DEGD box signature appears at 1005-1008 (DEGD).

Belongs to the SNF2/RAD54 helicase family. In terms of assembly, binds to DNA preferentially in the vicinity of transcriptional start sites. Interacts with MSH2 and TRIM28. Part of a complex composed of TRIM28, HDAC1, HDAC2 and EHMT2. Interacts with PCNA. In terms of tissue distribution, isoform 1 is expressed ubiquitously. Isoform 3 is expressed mainly in skin and esophagus. Expressed in fibroblasts and keratinocytes (at protein level).

It is found in the nucleus. Its subcellular location is the chromosome. The catalysed reaction is ATP + H2O = ADP + phosphate + H(+). Functionally, DNA helicase that possesses intrinsic ATP-dependent nucleosome-remodeling activity and is both required for DNA repair and heterochromatin organization. Promotes DNA end resection of double-strand breaks (DSBs) following DNA damage: probably acts by weakening histone DNA interactions in nucleosomes flanking DSBs. Required for the restoration of heterochromatin organization after replication. Acts at replication sites to facilitate the maintenance of heterochromatin by directing H3 and H4 histones deacetylation, H3 'Lys-9' trimethylation (H3K9me3) and restoration of silencing. The sequence is that of SWI/SNF-related matrix-associated actin-dependent regulator of chromatin subfamily A containing DEAD/H box 1 from Homo sapiens (Human).